Reading from the N-terminus, the 370-residue chain is DNA primase large subunit PriL (370 aa).

[4Fe-4S] cluster-binding residues include Cys268, Cys341, Cys350, and Cys354.

This sequence belongs to the eukaryotic-type primase large subunit family. Heterodimer of a small subunit (PriS) and a large subunit (PriL). It depends on [4Fe-4S] cluster as a cofactor.

Regulatory subunit of DNA primase, an RNA polymerase that catalyzes the synthesis of short RNA molecules used as primers for DNA polymerase during DNA replication. Stabilizes and modulates the activity of the small subunit, increasing the rate of DNA synthesis, and conferring RNA synthesis capability. The DNA polymerase activity may enable DNA primase to also catalyze primer extension after primer synthesis. May also play a role in DNA repair. The chain is DNA primase large subunit PriL from Archaeoglobus fulgidus (strain ATCC 49558 / DSM 4304 / JCM 9628 / NBRC 100126 / VC-16).